The sequence spans 371 residues: Chorismate synthase (371 aa).

Arg-48 and Arg-54 together coordinate NADP(+). Residues 125 to 127, 238 to 239, Gly-278, 293 to 297, and Arg-319 contribute to the FMN site; these read RSS, NA, and KPTSS.

The protein belongs to the chorismate synthase family. As to quaternary structure, homotetramer. Requires FMNH2 as cofactor.

It carries out the reaction 5-O-(1-carboxyvinyl)-3-phosphoshikimate = chorismate + phosphate. It participates in metabolic intermediate biosynthesis; chorismate biosynthesis; chorismate from D-erythrose 4-phosphate and phosphoenolpyruvate: step 7/7. Its function is as follows. Catalyzes the anti-1,4-elimination of the C-3 phosphate and the C-6 proR hydrogen from 5-enolpyruvylshikimate-3-phosphate (EPSP) to yield chorismate, which is the branch point compound that serves as the starting substrate for the three terminal pathways of aromatic amino acid biosynthesis. This reaction introduces a second double bond into the aromatic ring system. This chain is Chorismate synthase, found in Polynucleobacter asymbioticus (strain DSM 18221 / CIP 109841 / QLW-P1DMWA-1) (Polynucleobacter necessarius subsp. asymbioticus).